A 116-amino-acid polypeptide reads, in one-letter code: Peptidyl-tRNA hydrolase (116 aa).

This sequence belongs to the PTH2 family.

It is found in the cytoplasm. The enzyme catalyses an N-acyl-L-alpha-aminoacyl-tRNA + H2O = an N-acyl-L-amino acid + a tRNA + H(+). The natural substrate for this enzyme may be peptidyl-tRNAs which drop off the ribosome during protein synthesis. The sequence is that of Peptidyl-tRNA hydrolase (pth) from Methanococcus maripaludis (strain DSM 14266 / JCM 13030 / NBRC 101832 / S2 / LL).